The primary structure comprises 331 residues: Ketol-acid reductoisomerase (NADP(+)) (331 aa).

Residues 2–182 (AKMYYDKDAD…GGTRAGVIET (181 aa)) form the KARI N-terminal Rossmann domain. NADP(+) is bound by residues 25–28 (FGSQ), S51, S53, and 83–86 (DEKQ). The active site involves H108. G134 serves as a coordination point for NADP(+). Positions 183–328 (TFKEETETDL…KGLREMMAWI (146 aa)) constitute a KARI C-terminal knotted domain. Positions 191, 195, 227, and 231 each coordinate Mg(2+). Substrate is bound at residue S252.

This sequence belongs to the ketol-acid reductoisomerase family. Mg(2+) serves as cofactor.

It catalyses the reaction (2R)-2,3-dihydroxy-3-methylbutanoate + NADP(+) = (2S)-2-acetolactate + NADPH + H(+). It carries out the reaction (2R,3R)-2,3-dihydroxy-3-methylpentanoate + NADP(+) = (S)-2-ethyl-2-hydroxy-3-oxobutanoate + NADPH + H(+). It functions in the pathway amino-acid biosynthesis; L-isoleucine biosynthesis; L-isoleucine from 2-oxobutanoate: step 2/4. The protein operates within amino-acid biosynthesis; L-valine biosynthesis; L-valine from pyruvate: step 2/4. In terms of biological role, involved in the biosynthesis of branched-chain amino acids (BCAA). Catalyzes an alkyl-migration followed by a ketol-acid reduction of (S)-2-acetolactate (S2AL) to yield (R)-2,3-dihydroxy-isovalerate. In the isomerase reaction, S2AL is rearranged via a Mg-dependent methyl migration to produce 3-hydroxy-3-methyl-2-ketobutyrate (HMKB). In the reductase reaction, this 2-ketoacid undergoes a metal-dependent reduction by NADPH to yield (R)-2,3-dihydroxy-isovalerate. This chain is Ketol-acid reductoisomerase (NADP(+)), found in Thermoanaerobacter pseudethanolicus (strain ATCC 33223 / 39E) (Clostridium thermohydrosulfuricum).